A 278-amino-acid chain; its full sequence is NAD-capped RNA hydrolase NudC (278 aa).

Arg-84 is a binding site for substrate. Residues Cys-114 and Cys-117 each coordinate Zn(2+). A substrate-binding site is contributed by Glu-127. Cys-132 is a Zn(2+) binding site. A substrate-binding site is contributed by Tyr-140. Residues 141–264 (PRISPSMIVL…SIARYLIEAY (124 aa)) enclose the Nudix hydrolase domain. Positions 174, 190, and 194 each coordinate a divalent metal cation. Residues 175–196 (GFVEPGESAEDCVHREVMEEVQ) carry the Nudix box motif. 208-215 (QCWPFPHS) serves as a coordination point for substrate. Glu-235 is a binding site for a divalent metal cation. Ala-257 serves as a coordination point for substrate.

The protein belongs to the Nudix hydrolase family. NudC subfamily. Homodimer. It depends on Mg(2+) as a cofactor. Requires Mn(2+) as cofactor. The cofactor is Zn(2+).

It carries out the reaction a 5'-end NAD(+)-phospho-ribonucleoside in mRNA + H2O = a 5'-end phospho-adenosine-phospho-ribonucleoside in mRNA + beta-nicotinamide D-ribonucleotide + 2 H(+). It catalyses the reaction NAD(+) + H2O = beta-nicotinamide D-ribonucleotide + AMP + 2 H(+). The enzyme catalyses NADH + H2O = reduced beta-nicotinamide D-ribonucleotide + AMP + 2 H(+). Its function is as follows. mRNA decapping enzyme that specifically removes the nicotinamide adenine dinucleotide (NAD) cap from a subset of mRNAs by hydrolyzing the diphosphate linkage to produce nicotinamide mononucleotide (NMN) and 5' monophosphate mRNA. The NAD-cap is present at the 5'-end of some mRNAs and stabilizes RNA against 5'-processing. Has preference for mRNAs with a 5'-end purine. Catalyzes the hydrolysis of a broad range of dinucleotide pyrophosphates. This chain is NAD-capped RNA hydrolase NudC, found in Pseudomonas syringae pv. tomato (strain ATCC BAA-871 / DC3000).